A 2599-amino-acid polypeptide reads, in one-letter code: Non-reducing polyketide synthase azaA (2599 aa).

The tract at residues 95–231 (PNILLSPMVV…AARSISSLQQ (137 aa)) is N-terminal acylcarrier protein transacylase domain (SAT). C132 serves as the catalytic Nucleophile; for transacylase activity. The Proton donor/acceptor; for transacylase activity role is filled by H250. The 419-residue stretch at 372-790 (PNEIAVIGMS…GSNASMVVAQ (419 aa)) folds into the Ketosynthase family 3 (KS3) domain. Catalysis depends on for beta-ketoacyl synthase activity residues C539, H674, and H713. The interval 902–1193 (FGGQISNYVG…ITSMASRALG (292 aa)) is malonyl-CoA:ACP transacylase (MAT) domain. The N-terminal hotdog fold stretch occupies residues 1282-1413 (PKTLWSLIEA…GKLAFLSGQD (132 aa)). A PKS/mFAS DH domain is found at 1282–1591 (PKTLWSLIEA…YHKVAKASMS (310 aa)). The segment at 1310–1589 (LVSGHVIANT…INYHKVAKAS (280 aa)) is product template (PT) domain. The Proton acceptor; for dehydratase activity role is filled by H1314. Positions 1443-1591 (ADDIIQGRNI…YHKVAKASMS (149 aa)) are C-terminal hotdog fold. D1499 acts as the Proton donor; for dehydratase activity in catalysis. The interval 1601-1652 (EAAPSSSTRAHPTSSSSPRLPGPFVPEDKSQNETQTAGTNAVAKKKSEKSAQ) is disordered. Over residues 1602–1619 (AAPSSSTRAHPTSSSSPR) the composition is skewed to low complexity. Residues 1653–1727 (QNVLDKTRAL…GLVEYVQSAV (75 aa)) enclose the Carrier domain. S1687 carries the O-(pantetheine 4'-phosphoryl)serine modification. Residues 1749–1779 (NLAASPSSSSSSTNLTEDSSLDPTETTTNIS) form a disordered region. Residues 1750-1766 (LAASPSSSSSSTNLTED) are compositionally biased toward low complexity. Over residues 1769 to 1779 (LDPTETTTNIS) the composition is skewed to polar residues. A methyltransferase domain region spans residues 1952–2140 (DSLLNKLSYR…VGYGQVDWTD (189 aa)). An NADPH-binding (R) domain region spans residues 2222–2467 (ITGATGSLGV…LCWTPVNDVA (246 aa)).

The cofactor is pantetheine 4'-phosphate.

It participates in secondary metabolite biosynthesis. Its function is as follows. Non-reducing polyketide synthase; part of the gene cluster that mediates the biosynthesis of azaphilones, a class of fungal metabolites characterized by a highly oxygenated pyrano-quinone bicyclic core and exhibiting a broad range of bioactivities. In the first step, the non-reducing polyketide synthase azaA forms the hexaketide precursor from successive condensations of five malonyl-CoA units, presumably with a simple acetyl-CoA starter unit. The reactive polyketide chain then undergoes a PT-mediated C2-C7 cyclization to afford the aromatic ring and is eventually released as an aldehyde through the R-domain. The putative ketoreductase azaE is proposed to catalyze the reduction of the terminal ketone resulting in the early culture product FK17-P2a. The monooxygenase azaH was demonstrated to be the only enzyme required to convert FK17-P2a to azanigerone E. AzaH first hydroxylates the benzaldehyde intermediate FK17-P2a at C4, which triggers the formation of the pyran-ring to afford azanigerone E. In parallel, the 2,4-dimethylhexanoyl chain is synthesized by the HR-PKS azaB and is proposed to be transferred to the C4-hydroxyl of azanigerone E by the acyltransferase azaD directly from the ACP domain of azaB. Alternatively, the 2,4-dimethyl-hexanoyl chain may be offloaded from the HR-PKS as a carboxylic acid and converted to an acyl-CoA by azaF. The resulting acyl-CoA molecule could then be taken up as a substrate by AzaD to form azanigerone B. To yield the carboxylic acid substituent in azanigerone A, the hydroxypropyl side chain of azanigerone B would need to undergo a C-C oxidative cleavage catalyzed by cytochrome P450 AzaI. AzaI is proposed to act on a vicinal diol that leads to a C-C bond scission either through an alkoxyradical intermediate or a peroxy complex. In the biosynthesis of azanigerone A, azanigerone B first undergoes hydroxylation at C10, possibly catalyzed by one of the two FAD-dependent monooxygenases encoded in the cluster, azaG or azaL, resulting in the vicinal diol azanigerone C. Oxidative cleavage of azanigerone C by azaI would yield the corresponding aldehyde derivative of azanigerone A. Finally, the dehydrogenase azaJ is proposed to convert the aldehyde functional group into the carboxylic acid, completing the conversion from azanigerone B to azanigerone A. Alternatively, the oxidation of aldehyde to carboxylic acid may be catalyzed by the same P450 enzyme azaI via consecutive oxidation or by endogenous alcohol dehydrogenase. The polypeptide is Non-reducing polyketide synthase azaA (Aspergillus niger (strain ATCC 1015 / CBS 113.46 / FGSC A1144 / LSHB Ac4 / NCTC 3858a / NRRL 328 / USDA 3528.7)).